Here is a 357-residue protein sequence, read N- to C-terminus: tRNA N6-adenosine threonylcarbamoyltransferase (357 aa).

Residues histidine 120 and histidine 124 each coordinate Fe cation. Residues 143 to 147 (LVSGG), aspartate 176, glycine 189, and asparagine 289 each bind substrate. Residue aspartate 317 participates in Fe cation binding.

The protein belongs to the KAE1 / TsaD family. It depends on Fe(2+) as a cofactor.

It localises to the cytoplasm. It catalyses the reaction L-threonylcarbamoyladenylate + adenosine(37) in tRNA = N(6)-L-threonylcarbamoyladenosine(37) in tRNA + AMP + H(+). Its function is as follows. Required for the formation of a threonylcarbamoyl group on adenosine at position 37 (t(6)A37) in tRNAs that read codons beginning with adenine. Is involved in the transfer of the threonylcarbamoyl moiety of threonylcarbamoyl-AMP (TC-AMP) to the N6 group of A37, together with TsaE and TsaB. TsaD likely plays a direct catalytic role in this reaction. The protein is tRNA N6-adenosine threonylcarbamoyltransferase of Polynucleobacter necessarius subsp. necessarius (strain STIR1).